Consider the following 470-residue polypeptide: Cyclic AMP-responsive element-binding protein 3-like protein 3 (470 aa).

Residues 1–319 (MDGDISTGKM…TSKPAHAGTC (319 aa)) are Cytoplasmic-facing. Residues 59 to 145 (SDSDEFLNSI…PEPPRTQVHE (87 aa)) are disordered. Residues 239–302 (VLKKIRRKIR…LSLLEQLKHL (64 aa)) enclose the bZIP domain. Positions 241 to 270 (KKIRRKIRNKQSAQESRKKKKEYIDGLENR) are basic motif. Residues 281-302 (LQRKVLHLEKQNLSLLEQLKHL) are leucine-zipper. A Glycyl lysine isopeptide (Lys-Gly) (interchain with G-Cter in ubiquitin) cross-link involves residue Lys-290. A helical; Signal-anchor for type II membrane protein membrane pass occupies residues 320–340 (IAVLLLSFVLIILPSISPFTA). The Lumenal segment spans residues 341–470 (NKVDSPGDFI…RVVQDALGVL (130 aa)). N-linked (GlcNAc...) asparagine glycosylation is found at Asn-410 and Asn-417.

The protein belongs to the bZIP family. ATF subfamily. As to quaternary structure, binds DNA as a dimer. May form homodimers. Interacts with ATF6. Interacts with SYNV1/HRD1; this interaction leads to CREB3L3 ubiquitination and proteasomal degradation. Controlled by regulated intramembrane proteolysis (RIP). Following ER stress a fragment containing the cytoplasmic transcription factor domain is released by proteolysis. The cleavage seems to be performed sequentially by site-1 and site-2 proteases (PS1 and PS2). In terms of processing, N-glycosylation is required for optimal proteolytic activation. Post-translationally, ubiquitinated at Lys-290 by SYNV1/HRD1 via 'Lys-27'-linked ubiquitin.

The protein localises to the endoplasmic reticulum membrane. It is found in the nucleus. Functionally, transcription factor that may act during endoplasmic reticulum stress by activating unfolded protein response target genes. Activated in response to cAMP stimulation. Binds the cAMP response element (CRE). Activates transcription through box-B element and CRE. Seems to function synergistically with ATF6. In acute inflammatory response, may activate expression of acute phase response (APR) genes. May be involved in growth suppression. Regulates FGF21 transcription. Plays a crucial role in the regulation of triglyceride metabolism and is required for the maintenance of normal plasma triglyceride concentrations. The chain is Cyclic AMP-responsive element-binding protein 3-like protein 3 (Creb3l3) from Rattus norvegicus (Rat).